The primary structure comprises 135 residues: UPF0738 protein Aflv_2116 (135 aa).

Belongs to the UPF0738 family.

This Anoxybacillus flavithermus (strain DSM 21510 / WK1) protein is UPF0738 protein Aflv_2116.